A 228-amino-acid polypeptide reads, in one-letter code: Urease accessory protein UreF (228 aa).

It belongs to the UreF family. UreD, UreF and UreG form a complex that acts as a GTP-hydrolysis-dependent molecular chaperone, activating the urease apoprotein by helping to assemble the nickel containing metallocenter of UreC. The UreE protein probably delivers the nickel.

It is found in the cytoplasm. Required for maturation of urease via the functional incorporation of the urease nickel metallocenter. In Yersinia pestis bv. Antiqua (strain Antiqua), this protein is Urease accessory protein UreF.